Here is a 328-residue protein sequence, read N- to C-terminus: V-type sodium ATPase subunit C (328 aa).

The protein belongs to the V-ATPase V0D/AC39 subunit family.

Functionally, involved in ATP-driven sodium extrusion. This Enterococcus hirae (strain ATCC 9790 / DSM 20160 / JCM 8729 / LMG 6399 / NBRC 3181 / NCIMB 6459 / NCDO 1258 / NCTC 12367 / WDCM 00089 / R) protein is V-type sodium ATPase subunit C (ntpC).